A 434-amino-acid polypeptide reads, in one-letter code: MIVERVEEYLDRIEKINKDINALIEVKPEKVLEEAKKLEKDEKAKKKPLYGKIIVVKANINVEGYTISCASKTLENYIAPYDATVIEKIKENGGLIIGIANMDEFACGSSGETSYFGPTKNPRAKDRIPGGSSSGSAAAVSADLCDMALGSDTGGSIRNPASHCGVVGFKPSYGVVSRYGLCDLAMSFDQIGPLTKTAEDALLLTNIIKGKDLRDTTTVETKPFEKKDIKGFKVGVVKEFMDVADEKIRDKVEKAIEVFKDLGCEIVELSYKYVDLALPTYYLINYVEFFSSTRRYDGRRYGYKIEEVCGEEVLRRIMIGSMISQKEYSGKYYKNALKARNLMRNEMIKIMKDVDIIVGATVPKLPHKLGEKLTPMEMYSYDVLTVPANICGLCAGVVPCGDINGIPVGLQIQGKPFEDEKVLSAMIAFEKAME.

Catalysis depends on charge relay system residues K57 and S132. The Acyl-ester intermediate role is filled by S156.

Belongs to the amidase family. GatA subfamily. As to quaternary structure, heterotrimer of A, B and C subunits.

It catalyses the reaction L-glutamyl-tRNA(Gln) + L-glutamine + ATP + H2O = L-glutaminyl-tRNA(Gln) + L-glutamate + ADP + phosphate + H(+). In terms of biological role, allows the formation of correctly charged Gln-tRNA(Gln) through the transamidation of misacylated Glu-tRNA(Gln) in organisms which lack glutaminyl-tRNA synthetase. The reaction takes place in the presence of glutamine and ATP through an activated gamma-phospho-Glu-tRNA(Gln). The sequence is that of Glutamyl-tRNA(Gln) amidotransferase subunit A (gatA) from Methanocaldococcus jannaschii (strain ATCC 43067 / DSM 2661 / JAL-1 / JCM 10045 / NBRC 100440) (Methanococcus jannaschii).